The following is a 150-amino-acid chain: Large ribosomal subunit protein uL15 (150 aa).

A disordered region spans residues 1–60 (MKLSDLRPNPGANKRRKRVGRGPGSGHGKTATRGHKGQKSRSGGLKDPRRFEGGRSTTLM). The span at 30-39 (TATRGHKGQK) shows a compositional bias: basic residues. The span at 44-53 (GLKDPRRFEG) shows a compositional bias: basic and acidic residues.

It belongs to the universal ribosomal protein uL15 family. As to quaternary structure, part of the 50S ribosomal subunit.

Its function is as follows. Binds to the 23S rRNA. The sequence is that of Large ribosomal subunit protein uL15 from Thermus thermophilus (strain ATCC BAA-163 / DSM 7039 / HB27).